A 265-amino-acid polypeptide reads, in one-letter code: Histone H1 (265 aa).

Low complexity predominate over residues 1–27 (MATEEPIVAVETVPEPIVTEPTTITEP). 3 disordered regions span residues 1 to 66 (MATE…PTYE), 131 to 226 (AAKK…TTPG), and 242 to 265 (VKSV…GGRK). Residues 29–42 (VPEKEEPKAEVEKT) are compositionally biased toward basic and acidic residues. Residues 43 to 55 (KKAKGSKPKKASK) are compositionally biased toward basic residues. The 70-residue stretch at 61–130 (SHPTYEEMIK…KVKGSFKLSA (70 aa)) folds into the H15 domain. Over residues 140–171 (PKAKTAAKAKSVKAKPAAKPKAKAVVKPKVAS) the composition is skewed to basic residues. Low complexity predominate over residues 186 to 202 (KPKTVAAKTKPTAAKPK). The segment covering 203-215 (AVVKPKSKVKPAK) has biased composition (basic residues). Residues 216-226 (VAKTSVKTTPG) show a composition bias toward low complexity.

It belongs to the histone H1/H5 family.

The protein localises to the nucleus. Its subcellular location is the chromosome. Functionally, histones H1 are necessary for the condensation of nucleosome chains into higher-order structures. In Pisum sativum (Garden pea), this protein is Histone H1.